Reading from the N-terminus, the 351-residue chain is Formyl peptide receptor 2 (351 aa).

The Extracellular segment spans residues 1–29 (MESNYSIHLNGSEVVVYDSTISRVLWILS). N-linked (GlcNAc...) asparagine glycosylation is found at N4 and N10. Residues 30-50 (MVVVSITFFLGVLGNGLVIWV) form a helical membrane-spanning segment. Over 51 to 61 (AGFRMPHTVTT) the chain is Cytoplasmic. Residues 62–82 (IWYLNLALADFSFTATLPFLL) traverse the membrane as a helical segment. Over 83–99 (VEMAMKEKWPFGWFLCK) the chain is Extracellular. Cysteines 98 and 176 form a disulfide. The helical transmembrane segment at 100 to 120 (LVHIVVDVNLFGSVFLIALIA) threads the bilayer. The Cytoplasmic segment spans residues 121–144 (LDRCICVLHPVWAQNHRTVSLARK). The helical transmembrane segment at 145-165 (VVVGPWIFALILTLPIFIFLT) threads the bilayer. The Extracellular portion of the chain corresponds to 166-205 (TVRIPGGDVYCTFNFGSWAQTDEEKLNTAITFVTTRGIIR). A helical membrane pass occupies residues 206-226 (FLIGFSMPMSIVAVCYGLIAV). Topologically, residues 227–241 (KINRRNLVNSSRPLR) are cytoplasmic. Residues 242–262 (VLTAVVASFFICWFPFQLVAL) form a helical membrane-spanning segment. Over 263–282 (LGTVWFKETLLSGSYKILDM) the chain is Extracellular. A helical transmembrane segment spans residues 283–305 (FVNPTSSLAYFNSCLNPMLYVFM). Topologically, residues 306–351 (GQDFRERFIHSLPYSLERALSEDSGQTSDSSTSSTSPPADIELKAP) are cytoplasmic. A disordered region spans residues 325 to 351 (LSEDSGQTSDSSTSSTSPPADIELKAP). Low complexity predominate over residues 327 to 341 (EDSGQTSDSSTSSTS).

It belongs to the G-protein coupled receptor 1 family. In terms of assembly, interacts with Amyloid-beta protein 42, product of APP; the interaction takes place at the cell surface and the complex is then rapidly internalized. As to expression, primarily expressed in neutrophils. Not detected in vomeronasal neurons.

It localises to the cell membrane. Its function is as follows. High affinity receptor for N-formyl-methionyl peptides (FMLP), which are powerful neutrophil chemotactic factors. Stimulates chemotaxis in immune cells to site of infection or tissue damage upon recognition of several ligands, such as FMLP, or ligand involved in cell damage, disease or inflammation. Receptor for the chemokine-like protein FAM19A5, mediating FAM19A5-stimulated macrophage chemotaxis and the inhibitory effect on TNFSF11/RANKL-induced osteoclast differentiation. The sequence is that of Formyl peptide receptor 2 (Fpr2) from Mus musculus (Mouse).